Here is a 286-residue protein sequence, read N- to C-terminus: Pantothenate synthetase (286 aa).

30-37 (MGNLHDGH) serves as a coordination point for ATP. The Proton donor role is filled by histidine 37. Position 61 (glutamine 61) interacts with (R)-pantoate. Glutamine 61 contributes to the beta-alanine binding site. An ATP-binding site is contributed by 148–151 (GKKD). Glutamine 154 contributes to the (R)-pantoate binding site. ATP is bound by residues valine 177 and 185 to 188 (LSSR).

It belongs to the pantothenate synthetase family. As to quaternary structure, homodimer.

It localises to the cytoplasm. The enzyme catalyses (R)-pantoate + beta-alanine + ATP = (R)-pantothenate + AMP + diphosphate + H(+). The protein operates within cofactor biosynthesis; (R)-pantothenate biosynthesis; (R)-pantothenate from (R)-pantoate and beta-alanine: step 1/1. Its function is as follows. Catalyzes the condensation of pantoate with beta-alanine in an ATP-dependent reaction via a pantoyl-adenylate intermediate. In Psychrobacter sp. (strain PRwf-1), this protein is Pantothenate synthetase.